A 137-amino-acid polypeptide reads, in one-letter code: Protein LTO1 homolog (137 aa).

An N-acetylalanine modification is found at Ala2. A deca-GX3 motif; required for interaction with YAE1 and the CIA complex region spans residues 22–58; the sequence is GYQEGYEEGSSLGIVEGKRYGMVHGAKIGSEIGCYRG.

The protein belongs to the LTO1 family. As to quaternary structure, forms a complex with YAE1. Interacts with PYCR1 and PYCR2.

The protein localises to the nucleus. Its function is as follows. The complex LTO1:YAE1 functions as a target specific adapter that probably recruits apo-ABCE1 to the cytosolic iron-sulfur protein assembly (CIA) complex machinery. May be required for biogenesis of the large ribosomal subunit and initiation of translation. May play a role in the regulation of proline metabolism and ROS production. The polypeptide is Protein LTO1 homolog (Mus musculus (Mouse)).